Reading from the N-terminus, the 793-residue chain is MLKKTLLAYTIGFAFSPPANADGIEIAAVDFDRETLKSLGVDPNISHYFSRSARFLPGEYSLIVSVNGEKKGNIATRFDENGDICLDQAFLQQAGLKIPSEEKNGCYDYILSYPGTTITPLPNQEALDIIVSPQAIIPIGLDLTNAATGGTAALLNYSLMSSRAEFSNGSSDYSQAALEGGININDWMLRSHQFLTQTNGTFSNQNSSTYLQRTFTDLKTLMRAGEVNLNNSVLEGASIYGIEIAPDNALQTSGSGVQVTGIANTSQARVEIRQQGVLIHSILVPAGAFTIPDVPVRNGNSDLNVTVVETDGSSHNYIVPSTLFNQHVESFQGYRFAIGRVDDDYDESPWVISASSGWNLTRWSAMNGGVIVAENYQAASIRSSLVPLPDLTVSSQISTSQDTKDSLQGQKYRLDANYNLPFSLGLTTSLTRSDRHYRELSEAIDDDYTDPTKSTYALGLNWSNSILGGFNISGYKTYSYDGDNDSSNLNINWNKAFKHATVSVNWQHQLSASENNEDDGDLFYVNISIPFGRSNTATLYTRHDDHKTHYGTGVMGVVSDEMSYYVNAERDHDERETSLNGSISSNLHYTQVSLAAGASGSDSRTYNGTMSGGIAVHDQGVTFSPWTINDTFAIAKMDNNIAGVRITSQAGPVWTDFRGNAVIPSIQPWRTSGVEIDTASLPKNVDIGNGTKMIKQGRGAVGKVGFSAITQRRALLNITLSDGKKLPRGVAIEDSEGNYLTTSVDDGVVFLNNIKPDMVLDIKDEQQSCRIHLTFPEDAPKDVFYETATGECQ.

Residues Met-1–Ala-21 form the signal peptide. A disulfide bond links Cys-769 and Cys-792.

It belongs to the fimbrial export usher family.

The protein resides in the cell outer membrane. Its function is as follows. Involved in the export and assembly of a fimbrial subunit across the outer membrane. This is an uncharacterized protein from Escherichia coli (strain K12).